A 66-amino-acid chain; its full sequence is Trypsin inhibitor (66 aa).

5 cysteine pairs are disulfide-bonded: C5–C28, C16–C44, C19–C58, C21–C38, and C43–C64.

The protein resides in the secreted. The chain is Trypsin inhibitor from Ascaris suum (Pig roundworm).